The chain runs to 140 residues: 3-hydroxyacyl-[acyl-carrier-protein] dehydratase FabZ (140 aa).

His-48 is a catalytic residue.

Belongs to the thioester dehydratase family. FabZ subfamily.

Its subcellular location is the cytoplasm. The enzyme catalyses a (3R)-hydroxyacyl-[ACP] = a (2E)-enoyl-[ACP] + H2O. In terms of biological role, involved in unsaturated fatty acids biosynthesis. Catalyzes the dehydration of short chain beta-hydroxyacyl-ACPs and long chain saturated and unsaturated beta-hydroxyacyl-ACPs. This chain is 3-hydroxyacyl-[acyl-carrier-protein] dehydratase FabZ, found in Latilactobacillus sakei subsp. sakei (strain 23K) (Lactobacillus sakei subsp. sakei).